A 2077-amino-acid chain; its full sequence is MKIITSSTNQNDSKYGPRAGKQCMSNSFSFLHTVYLNGINNSLNAGTIDAIMEEGYHLDTASTLALMLDNSDSQDYRLLTEIPRRIHSRYGVTQHELSRPFNGTLDTQKIDNEVYFGLIDFILYGKTKNCPAFAVITIGVLSRAIFFLNNTLYLFDSHPTEREATAAIYICQDIEEAYELLTAHGTEGFYYDASFIFFIETSNLSLSSHDAELLILKTYKDPDIAITLDKFSSTEIHDIKKTDDIGSQQDLVAAKTTYLERAPQKRKKNSHSLELELNDKKKKDTASLTYYATEVDLIPSFYELRSQFQSLFHDLKSFPIMKSQFNWTIYLQDSPMNPNQPFATPFLWNRVFHLLCQIVDVFVGVGSTNDDSSKQKQQTIFINYLLPFKDFSEVFNEALTACQENNLDILLIYNNYLCKTTTFRTLERILLSKFLAIADNEHEKHYEWVKSWTTQMLQEMPKKLDDIENYLKAYVSQNPVKHFHEFVCLNKAEKHNIAVLLNEKRKEIQEDIERDKNIFAQLSNFIDKLGETPALPIESENVHKVHTSDITEAIVPRFMTESIELPNISTLNNTQQLSLEKQISEKLTNTIHTLRNKFTKIVQDNYNNLAAGFMPVTELNCLFAYLVNLYFNIEVLKHSGLNINTELLQEVEKLYDNTQFLRFGTSHFNINNLSNFTLSIRKMFVDFYNSQKPSDRASEILAAIESILADPSKNKTIVNIEMIKSQLEELGKMEISTTENKQTAEITKQILGDQELTPIYDFLHHLSAYNLPNTTTVKNLHLHFILEKRPDIAAILHDKIQSILDICIDDMLNDITVPEQTFSTVLFLVDLFPNSTEKTALFESVLTLRQLAKKCANLKTLEEFDDLAQFITTNSEQLQNMMKQHFGKKIPTLMDHIKFLYSQKIITAEEKNWIQRAKTAVITSPEELTAFLATAPTKHALQTCKPELDKALQRHMEEQMKQTAENDKKHILTIRNTLEKRLNDILLILKDGQFSSLETVHLNLLETFLKQLQDNDLIIHFTHALLPVLKDIETTISKTISDILEKILIKTPLNPEQMSKEEQKYTPLLSFLSKFKKTTFCTEDVKTEIDQMQKSITFLTKIATSTNKYTRISHSVYGQELNLYEERITELKKETNKIKEQLSKEYAVAEKKILLSSQDAKTNKIYLVLNTHTLKEIKNTQFRETAFAKALTVEVNNKENQLQELLNHFNAHLKAKMDQNHITKLSFDTKWTAFVSDSRLYFPDFVDIKLQDFISDPFKVISQLMNKAANEMPYIQAEITLKWLTQLVHDINKFCLSAISEFGKEAIPFNYAALRDLEYQINTKYVEIENKVICNETVENTKNIPKLTKLLKELDPKRVAGGQKQYQTLMNKILTSETSMQQTYEKEQLKKEYFETVNNVASFKLAFNFPKQRQNVERLMEKFKSLPKGQPFEKFPEENDLFSDSLITENYINGLRALLNFITAAQNYIQNTLLKQWAVFQQQNFIPIDYSVANVKPISDLYARLRIERDRQVFYQVNSVFGTQLIVDETGVPLQFHNIFYNAVVKFFSLNYKQIHVPEDTPRLVSSQYKLLSVCKSFIIILQQFWENIITLDLGPYLRDGTQNFKRELIPIVNLKLFIYIITQAWTASEDSTVSTAFELPIKQFTLLILCSHPEYLYGCLSHPTDLVINSLAKSIDKDSLYDTFVVSHNPPEKPMHLMRSICIDTQLWQSAKLMKDTFQQTFFTQLCPQNEKFFIYLTAFLILPYKFLNYIWIQYKPITFTQRSYQNLIKDLCSEYVHQNKITMSSVTPHEPDTIKSGEKITSKITVHKAQNTPTLTRLQAQEYVFDYILYSFLTGYEMTFAMYIDTIEKTYLLCMRHLENVLHDKDFQSVLRARTFDINYILKQSWTKNIVEHSIFSVQLNKIVSYLNHTNRATPNIPLILFNYDNEVVNVYLPPMSTDPKKVAFYIKNPFHFPVQEYEATDLISFHLYPKTTDILNQLPPNKTVSTRPYNLSSETLTTKNLSEPKFKQPTVTGLMPKSQSIILSTDTNVLETSPDIKANTASAAIKDVTLAREQISEFSESINTTLSKLKSLYL.

A deubiquitination activity region spans residues 1-231; the sequence is MKIITSSTNQ…PDIAITLDKF (231 aa). One can recognise a Peptidase C76 domain in the interval 3–221; the sequence is IITSSTNQND…ELLILKTYKD (219 aa). Residues Cys-23, Asp-156, and His-158 contribute to the active site. Position 287 (Ser-287) is a region of interest, interaction with inner tegument protein.

This sequence belongs to the herpesviridae large tegument protein family. In terms of assembly, interacts with host CUL1 and CUL4A; these interactions inhibit the E3 ligase activity of cullins. Interacts with inner tegument protein. Interacts with capsid vertex specific component CVC2. Interacts with the major capsid protein/MCP.

Its subcellular location is the virion tegument. The protein localises to the host cytoplasm. The protein resides in the host nucleus. It carries out the reaction Thiol-dependent hydrolysis of ester, thioester, amide, peptide and isopeptide bonds formed by the C-terminal Gly of ubiquitin (a 76-residue protein attached to proteins as an intracellular targeting signal).. Functionally, large tegument protein that plays multiple roles in the viral cycle. During viral entry, remains associated with the capsid while most of the tegument is detached and participates in the capsid transport toward the host nucleus. Plays a role in the routing of the capsid at the nuclear pore complex and subsequent uncoating. Within the host nucleus, acts as a deneddylase and promotes the degradation of nuclear CRLs (cullin-RING ubiquitin ligases) and thereby stabilizes nuclear CRL substrates, while cytoplasmic CRLs remain unaffected. These modifications prevent host cell cycle S-phase progression and create a favorable environment allowing efficient viral genome replication. Participates later in the secondary envelopment of capsids. Indeed, plays a linker role for the association of the outer viral tegument to the capsids together with the inner tegument protein. This is Large tegument protein deneddylase (U31) from Homo sapiens (Human).